A 184-amino-acid polypeptide reads, in one-letter code: dITP/XTP pyrophosphatase (184 aa).

8–13 (TGNKGK) serves as a coordination point for substrate. Residues Glu-37 and Asp-66 each contribute to the Mg(2+) site. Asp-66 acts as the Proton acceptor in catalysis. Residues Ser-67, 142-145 (FGYD), Lys-163, and 168-169 (HR) contribute to the substrate site.

This sequence belongs to the HAM1 NTPase family. In terms of assembly, homodimer. Requires Mg(2+) as cofactor.

It catalyses the reaction XTP + H2O = XMP + diphosphate + H(+). It carries out the reaction dITP + H2O = dIMP + diphosphate + H(+). The catalysed reaction is ITP + H2O = IMP + diphosphate + H(+). In terms of biological role, pyrophosphatase that catalyzes the hydrolysis of nucleoside triphosphates to their monophosphate derivatives, with a high preference for the non-canonical purine nucleotides XTP (xanthosine triphosphate), dITP (deoxyinosine triphosphate) and ITP. Seems to function as a house-cleaning enzyme that removes non-canonical purine nucleotides from the nucleotide pool, thus preventing their incorporation into DNA/RNA and avoiding chromosomal lesions. The chain is dITP/XTP pyrophosphatase from Methanosarcina mazei (strain ATCC BAA-159 / DSM 3647 / Goe1 / Go1 / JCM 11833 / OCM 88) (Methanosarcina frisia).